The following is a 61-amino-acid chain: MAQPKKKTSNAKRDQRRATWKRKARVQAEKALALGKSILSGNNTGFYYPQLEAEEEEQAEE.

The segment covering 1–10 (MAQPKKKTSN) has biased composition (basic residues). Residues 1-23 (MAQPKKKTSNAKRDQRRATWKRK) form a disordered region.

The protein belongs to the bacterial ribosomal protein bL32 family.

This is Large ribosomal subunit protein bL32 from Gloeobacter violaceus (strain ATCC 29082 / PCC 7421).